The sequence spans 876 residues: AP-5 complex subunit beta-1 (876 aa).

In terms of assembly, probably part of the adaptor protein complex 5 (AP-5), a tetramer composed of AP5B1, AP5M1, AP5S1 and AP5Z1. Interacts with ZFYVE26 and SPG11.

Functionally, as part of AP-5, a probable fifth adaptor protein complex, it may be involved in endosomal transport. This chain is AP-5 complex subunit beta-1 (Ap5b1), found in Rattus norvegicus (Rat).